Consider the following 932-residue polypeptide: PMS1 protein homolog 1 (932 aa).

The disordered stretch occupies residues threonine 465–isoleucine 493. The segment at residues isoleucine 571–isoleucine 639 is a DNA-binding region (HMG box).

It belongs to the DNA mismatch repair MutL/HexB family. As to quaternary structure, component of the DNA mismatch repair (MMR) complex composed at least of MSH2, MSH3, MSH6, PMS1 and MLH1. The MutL-beta complex is a heterodimer of PMS1 and MLH1. Interacts with MCM9.

Its subcellular location is the nucleus. Probably involved in the repair of mismatches in DNA. The protein is PMS1 protein homolog 1 (PMS1) of Homo sapiens (Human).